A 618-amino-acid chain; its full sequence is UvrABC system protein C (618 aa).

The 79-residue stretch at 20-98 (TAPGVYRMYA…IKSLSPRYNV (79 aa)) folds into the GIY-YIG domain. One can recognise a UVR domain in the interval 207–242 (DQLGEEIMHSMQQASEALEFERAARLRDLLSSLRSM).

Belongs to the UvrC family. As to quaternary structure, interacts with UvrB in an incision complex.

The protein resides in the cytoplasm. Functionally, the UvrABC repair system catalyzes the recognition and processing of DNA lesions. UvrC both incises the 5' and 3' sides of the lesion. The N-terminal half is responsible for the 3' incision and the C-terminal half is responsible for the 5' incision. The sequence is that of UvrABC system protein C from Xanthomonas campestris pv. campestris (strain 8004).